Reading from the N-terminus, the 285-residue chain is Probable glucose uptake protein GlcU (285 aa).

Transmembrane regions (helical) follow at residues 4 to 21 (FLAI…LFNV), 26 to 48 (GPYS…VYIF), 52 to 71 (VLTP…WALG), 84 to 106 (VSRT…GVIV), 110 to 132 (WSTI…GVIL), 153 to 175 (IIIL…LFNV), 180 to 197 (ALLP…LLTF), 210 to 227 (IIPG…FISQ), 232 to 254 (VATS…ILIL), and 266 to 283 (IVVG…LGIA).

It belongs to the GRP transporter (TC 2.A.7.5) family.

Its subcellular location is the cell membrane. Functionally, involved in the uptake of glucose. In Bacillus anthracis, this protein is Probable glucose uptake protein GlcU (glcU).